A 508-amino-acid polypeptide reads, in one-letter code: Octopamine receptor beta-1R (508 aa).

Residues 1 to 111 (MTLLQRLQAM…SHLALVFVKC (111 aa)) lie on the Extracellular side of the membrane. The chain crosses the membrane as a helical span at residues 112 to 132 (FIIGFIILAAILGNMLVIVSV). Residues 133–139 (MRHRKLR) lie on the Cytoplasmic side of the membrane. A helical membrane pass occupies residues 140–160 (IITNYFVVSLAVADMLVALCA). Topologically, residues 161-186 (MTFNASVMISGKWMFGSVMCDMWNSF) are extracellular. N-linked (GlcNAc...) asparagine glycosylation is present at Asn164. A helical transmembrane segment spans residues 187–209 (DVYFSTASIMHLCCISVDRYYAI). The Cytoplasmic portion of the chain corresponds to 210-223 (VQPLDYPLIMTQRR). The chain crosses the membrane as a helical span at residues 224–244 (VFIMLLMVWLSPALLSFLPIC). Topologically, residues 245–270 (SGWYTTTENYKYLKSNPHICEFKVNK) are extracellular. Residues 271-291 (AYAIVSSSMSFWIPGIVMLSM) traverse the membrane as a helical segment. Over 292–351 (YYRIYQEADRQERLVYRSKVAALLLEKHLQISQIPKPRPSIQVEQSTISTMRRERKAART) the chain is Cytoplasmic. A helical membrane pass occupies residues 352 to 372 (LGIIMSAFLICWLPFFLWYIV). Residues 373–383 (SSLCDSCITPR) lie on the Extracellular side of the membrane. The chain crosses the membrane as a helical span at residues 384–404 (LLVGILFWIGYFNSALNPIIY). The Cytoplasmic portion of the chain corresponds to 405 to 508 (AYFNRDFRAA…MQQLHPLYTN (104 aa)). Residues 440–464 (RDLEFGGPSRRGTNGAQRTGSGSAE) form a disordered region. Over residues 450 to 461 (RGTNGAQRTGSG) the composition is skewed to polar residues.

Belongs to the G-protein coupled receptor 1 family. As to expression, in the adult, expressed in the superior protocerebrum and the optic lobe medulla of the central nervous system, nurse cells of egg chambers in the ovary at oogenic stages 1-10, and spermatogonia and spermatocytes in the testis. Expressed in embryonic and larval ventral nerve cord and brain lobe, and the larval imaginal disk and larval salivary gland. Also expressed in larval synaptic boutons and retinal cells in the optic disk.

The protein resides in the cell membrane. In terms of biological role, autoreceptor for octopamine, which is a neurotransmitter, neurohormone, and neuromodulator in invertebrates. Negatively regulates synaptic growth by activating the inhibitory G protein Galphao and limiting cAMP production. Antagonizes the action of Octbeta2R which stimulates synaptic growth. The protein is Octopamine receptor beta-1R of Drosophila melanogaster (Fruit fly).